The chain runs to 517 residues: MKVTITSIDQVLPSVEITAPKSLALSHIDEWHSRGRSSLVWLYPKPKKPTQSLQLLDHLRSSLSQALNKFPQYAGKLSHSLQTGTSQKSKTRLCLTWGTGNDPGVHYITARASSPIDALLPPLGTSTGFTNGSGSYAWDRSGRSCIGLWPAVPLNKVYETCIQITTFECGGFSLSITMNHAVADATSVILFARHWSKTHELMVKVQTPSLSIAEPCFAPHLIDQYSTLELQDEGDNGKLLNKAHALPTLRNDLYESGARSLPDRLELSETYSVGDDIAVGDWERSGPMRSYMLHFSKEDINKIWESAKKEAGQDVSRQAAIVSYIWLAIIRAREWDKHGVCEPIKLFITFDVRRRLGLPDTLLGSPVLVTHVKFNGNDAISKSHGLLANRIWKTLSTYDVESVCAALYDITSSRPLISPAIWLGGRSTLFSSLCHADMYDVTFHETGPLLAAPAFAGMGGMIGLIKSKSAVPSRLPETYEDGIDMFFELDTESSIKLFSDPALSIFDGRALLQEFRQ.

The active-site Proton acceptor is the histidine 180.

It belongs to the plant acyltransferase family.

It functions in the pathway mycotoxin biosynthesis. In terms of biological role, acyltransferase; part of the gene clusters that mediate the biosynthesis of the host-selective toxins (HSTs) AF-toxins responsible for Alternaria black spot of strawberry disease by the strawberry pathotype. AF-toxin I and III are valine derivatives of 2,3-dyhydroxy-isovaleric acid and 2-hydroxy-isovaleric acid respectively, while AF II is an isoleucine derivative of 2-hydroxy-valeric acid. These derivatives are bound to a 9,10-epoxy-8-hydroxy-9-methyl-decatrienoic acid (EDA) moiety. On cellular level, AF-toxins affect plasma membrane of susceptible cells and cause a sudden increase in loss of K(+) after a few minutes of toxin treatment. The aldo-keto reductase AFTS1 catalyzes the conversion of 2-keto-isovaleric acid (2-KIV) to 2-hydroxy-isovaleric acid (2-HIV) by reduction of its ketone to an alcohol. The acyl-CoA ligase AFT1, the hydrolase AFT2 and the enoyl-CoA hydratases AFT3 and AFT6, but also the polyketide synthase AFT9, the acyl-CoA dehydrogenase AFT10, the cytochrome P450 monooxygenase AFT11 and the oxidoreductase AFT12 are all involved in the biosynthesis of the AK-, AF- and ACT-toxin common EDA structural moiety. The exact function of each enzyme, and of additional enzymes identified within the AF-toxin clusters have still to be determined. In Alternaria alternata (Alternaria rot fungus), this protein is Acyltransferase AFT15-1 (AFT15-1).